Consider the following 459-residue polypeptide: MSKVWSNRFESSLNPFIEEFNASIGFDKTLIFEDIDCSIAHAKMLGKTKVLSADESQKIIEGLENIKQDFIKGEFSPGAPSEDIHYSIEEKLIDLIGDTGKKLHTGRSRNDQVGTDIRLWLRKKIDTIDNLLAELQNSLFAVAESNIYTLIPGYTHMQRAQPLSLAHHFLAYLEMFQRDRERLREVRARVNISPLGAAALAGTKIKIDRYFTASELGFDNIYKNSIDAVSDRDFCIEFASASALIMSHLSRISEEIILWVTDEFSFAKLTDKCATGSSLMPQKKNPDVPELIRGKTGRVYGNLHTLLTLIKGVPLAYNKDFQEDKEPIFDTVDTISSCLKAMRILLDEGIEFNVDKLIDSVNNDFSNATDLADYLVSKQVPFRKAYQIVGDIVKYCLTKNILFKDLNLSEFQTFHDEFKEDIYENLNPMNVVKSRNSVGGTGFEQVEIELNNWKKKLFT.

It belongs to the lyase 1 family. Argininosuccinate lyase subfamily.

The protein localises to the cytoplasm. It catalyses the reaction 2-(N(omega)-L-arginino)succinate = fumarate + L-arginine. It functions in the pathway amino-acid biosynthesis; L-arginine biosynthesis; L-arginine from L-ornithine and carbamoyl phosphate: step 3/3. This Prochlorococcus marinus (strain MIT 9515) protein is Argininosuccinate lyase.